The sequence spans 318 residues: Type II methyltransferase M.HaeII (318 aa).

Positions 4–304 (YKTIDLFAGI…GSMINSLNMA (301 aa)) constitute an SAM-dependent MTase C5-type domain. Residue C73 is part of the active site.

This sequence belongs to the class I-like SAM-binding methyltransferase superfamily. C5-methyltransferase family.

The catalysed reaction is a 2'-deoxycytidine in DNA + S-adenosyl-L-methionine = a 5-methyl-2'-deoxycytidine in DNA + S-adenosyl-L-homocysteine + H(+). A methylase, recognizes the double-stranded sequence 5'-RGCGCY-3', methylates C-? on both strands, and protects the DNA from cleavage by the HaeII endonuclease. This chain is Type II methyltransferase M.HaeII (haeIIM), found in Haemophilus aegyptius.